The sequence spans 477 residues: RTX-I toxin determinant D (477 aa).

At 1–59 (MKTWLMGLYEFFQAYKTVWTEIWKIRHQLDTPDREKDENEFLPAHLELIETPVSKKPRL) the chain is on the cytoplasmic side. A helical transmembrane segment spans residues 60–80 (IAYLIMLFLFLALVISIVSHV). The Periplasmic portion of the chain corresponds to 81–477 (EIVATATGKL…ESVSESLRER (397 aa)).

It belongs to the membrane fusion protein (MFP) (TC 8.A.1) family.

It is found in the cell inner membrane. Its function is as follows. Involved in the transport of the toxin RTX-I as well as that of RTX-II. The protein is RTX-I toxin determinant D (apxID) of Actinobacillus pleuropneumoniae (Haemophilus pleuropneumoniae).